Reading from the N-terminus, the 198-residue chain is Uracil phosphoribosyltransferase homolog (198 aa).

The protein belongs to the UPRTase family.

The protein localises to the plastid. Its subcellular location is the chloroplast. This chain is Uracil phosphoribosyltransferase homolog, found in Pyropia yezoensis (Susabi-nori).